The following is a 557-amino-acid chain: uncharacterized protein (557 aa).

The stretch at 2–45 forms a coiled coil; sequence NEDETSILNKKMEKIEVEMAEFERLGAEREKEAVERIVQEENQN. Disordered regions lie at residues 39-62, 101-127, 356-402, and 536-557; these read VQEE…KSRK, NRTY…RKNF, PSPS…YPSN, and ANAT…YDHI. Composition is skewed to polar residues over residues 101 to 110, 358 to 380, 390 to 400, and 536 to 548; these read NRTYYKNSQG, PSFQ…SSNA, DSATYPTSIYP, and ANAT…NLDT.

The protein localises to the cytoplasm. It localises to the nucleus. This is an uncharacterized protein from Schizosaccharomyces pombe (strain 972 / ATCC 24843) (Fission yeast).